The sequence spans 330 residues: NADH-quinone oxidoreductase subunit H (330 aa).

8 consecutive transmembrane segments (helical) span residues 5–25 (LLTL…VLTL), 78–98 (WVFM…FAVI), 120–140 (IGLL…ALGG), 155–175 (AMAQ…PVVM), 191–211 (SLPN…AIMA), 243–263 (FFVG…VLFL), 271–291 (LPGI…FIWV), and 308–328 (WKIL…WLIW).

It belongs to the complex I subunit 1 family. NDH-1 is composed of 14 different subunits. Subunits NuoA, H, J, K, L, M, N constitute the membrane sector of the complex.

The protein localises to the cell inner membrane. The catalysed reaction is a quinone + NADH + 5 H(+)(in) = a quinol + NAD(+) + 4 H(+)(out). In terms of biological role, NDH-1 shuttles electrons from NADH, via FMN and iron-sulfur (Fe-S) centers, to quinones in the respiratory chain. The immediate electron acceptor for the enzyme in this species is believed to be ubiquinone. Couples the redox reaction to proton translocation (for every two electrons transferred, four hydrogen ions are translocated across the cytoplasmic membrane), and thus conserves the redox energy in a proton gradient. This subunit may bind ubiquinone. In Syntrophotalea carbinolica (strain DSM 2380 / NBRC 103641 / GraBd1) (Pelobacter carbinolicus), this protein is NADH-quinone oxidoreductase subunit H.